The following is a 62-amino-acid chain: Large ribosomal subunit protein bL28 (62 aa).

The protein belongs to the bacterial ribosomal protein bL28 family.

This Onion yellows phytoplasma (strain OY-M) protein is Large ribosomal subunit protein bL28.